The sequence spans 548 residues: T-complex protein 1 subunit theta (548 aa).

An N-acetylalanine modification is found at A2. At S23 the chain carries Phosphoserine. The residue at position 30 (Y30) is a Phosphotyrosine. ADP is bound by residues Y47 and G48. D99 provides a ligand contact to Mg(2+). Residues G100, T101, N102, and F103 each contribute to the ADP site. 3 residues coordinate ATP: G100, T101, and N102. S162 is subject to Phosphoserine. M169, S170, and K171 together coordinate ADP. Positions 170 and 171 each coordinate ATP. At S213 the chain carries Phosphoserine. Residues K224, K254, and K260 each participate in a glycyl lysine isopeptide (Lys-Gly) (interchain with G-Cter in SUMO2) cross-link. 2 positions are modified to phosphoserine: S269 and S317. K318 and K400 each carry N6-acetyllysine. G412 is an ADP binding site. G412 serves as a coordination point for ATP. Residue K459 forms a Glycyl lysine isopeptide (Lys-Gly) (interchain with G-Cter in SUMO1) linkage. N6-acetyllysine is present on K466. D499 contributes to the ADP binding site. ATP is bound by residues D499 and K504. A Phosphotyrosine modification is found at Y505. Positions 529 to 548 (PAGGPKPPSGKKDWDDDQND) are disordered. Residue K534 forms a Glycyl lysine isopeptide (Lys-Gly) (interchain with G-Cter in SUMO2) linkage. S537 bears the Phosphoserine mark. K539 participates in a covalent cross-link: Glycyl lysine isopeptide (Lys-Gly) (interchain with G-Cter in SUMO2).

Belongs to the TCP-1 chaperonin family. As to quaternary structure, component of the chaperonin-containing T-complex (TRiC), a hexadecamer composed of two identical back-to-back stacked rings enclosing a protein folding chamber. Each ring is made up of eight different subunits: TCP1/CCT1, CCT2, CCT3, CCT4, CCT5, CCT6A/CCT6, CCT7, CCT8. Interacts with PACRG. Interacts with DNAAF4. Interacts with synaptic plasticity regulator PANTS.

It is found in the cytoplasm. Its subcellular location is the cytoskeleton. The protein localises to the microtubule organizing center. The protein resides in the centrosome. It localises to the cilium basal body. The catalysed reaction is ATP + H2O = ADP + phosphate + H(+). Functionally, component of the chaperonin-containing T-complex (TRiC), a molecular chaperone complex that assists the folding of actin, tubulin and other proteins upon ATP hydrolysis. The TRiC complex mediates the folding of WRAP53/TCAB1, thereby regulating telomere maintenance. As part of the TRiC complex may play a role in the assembly of BBSome, a complex involved in ciliogenesis regulating transports vesicles to the cilia. The protein is T-complex protein 1 subunit theta (CCT8) of Macaca fascicularis (Crab-eating macaque).